The primary structure comprises 199 residues: uncharacterized protein (199 aa).

It to M.jannaschii MJ1356.

This is an uncharacterized protein from Methanocaldococcus jannaschii (strain ATCC 43067 / DSM 2661 / JAL-1 / JCM 10045 / NBRC 100440) (Methanococcus jannaschii).